The following is a 95-amino-acid chain: Osteocalcin-2 (95 aa).

Residues 1-23 (MRTLSLLTLLALAALCLSDLTDA) form the signal peptide. Residues 24–49 (KPSGPESDKAFMSKQEGNKVVNRLRR) constitute a propeptide that is removed on maturation. Positions 46-92 (RLRRYLGASVPSPDPLEPTREQCELNPACDELSDQYGLKTAYKRIYG) constitute a Gla domain. Ca(2+) is bound by residues E62, E66, E69, and D75. An intrachain disulfide couples C68 to C74.

This sequence belongs to the osteocalcin/matrix Gla protein family. Gamma-carboxyglutamate residues are formed by vitamin K dependent carboxylation by GGCX. These residues are essential for the binding of calcium. Carboxylated in a Ptprv/Esp-dependent process. Decarboxylation promotes the hormone activity. In terms of tissue distribution, bone.

It localises to the secreted. Its function is as follows. The carboxylated form is one of the main organic components of the bone matrix, which constitutes 1-2% of the total bone protein: it acts as a negative regulator of bone formation and is required to limit bone formation without impairing bone resorption or mineralization. The carboxylated form binds strongly to apatite and calcium. Functionally, the uncarboxylated form acts as a hormone secreted by osteoblasts, which regulates different cellular processes, such as energy metabolism, male fertility and brain development. Regulates of energy metabolism by acting as a hormone favoring pancreatic beta-cell proliferation, insulin secretion and sensitivity and energy expenditure. Uncarboxylated osteocalcin hormone also promotes testosterone production in the testes: acts as a ligand for G protein-coupled receptor GPRC6A at the surface of Leydig cells, initiating a signaling response that promotes the expression of enzymes required for testosterone synthesis in a CREB-dependent manner. Also acts as a regulator of brain development: osteocalcin hormone crosses the blood-brain barrier and acts as a ligand for GPR158 on neurons, initiating a signaling response that prevents neuronal apoptosis in the hippocampus, favors the synthesis of all monoamine neurotransmitters and inhibits that of gamma-aminobutyric acid (GABA). Osteocalcin also crosses the placenta during pregnancy and maternal osteocalcin is required for fetal brain development. This Mus musculus (Mouse) protein is Osteocalcin-2 (Bglap2).